We begin with the raw amino-acid sequence, 456 residues long: CBL-interacting serine/threonine-protein kinase 2 (456 aa).

Residues 12-266 (YEVGRLLGQG…IAKIKESSWF (255 aa)) enclose the Protein kinase domain. ATP is bound by residues 18–26 (LGQGTFAKV) and Lys41. The Proton acceptor role is filled by Asp134. Residues 152–181 (DFGLSALADCKRQDGLLHTTCGTPAYVAPE) are activation loop. Phosphoserine is present on Ser156. Position 170 is a phosphothreonine (Thr170). The tract at residues 280-309 (MEKQQVREATNPMEAGGSGQNENGENHEPP) is disordered. Residues 309–333 (PRLATLNAFDIIALSTGFGLAGLFG) enclose the NAF domain. The segment at 338 to 367 (KRESRFASQKPASEIISKLVEVAKCLKLKI) is PPI.

The protein belongs to the protein kinase superfamily. CAMK Ser/Thr protein kinase family. SNF1 subfamily. Interacts with CBL2, CBL3 and CBL5. It depends on Mn(2+) as a cofactor.

It catalyses the reaction L-seryl-[protein] + ATP = O-phospho-L-seryl-[protein] + ADP + H(+). It carries out the reaction L-threonyl-[protein] + ATP = O-phospho-L-threonyl-[protein] + ADP + H(+). Functionally, CIPK serine-threonine protein kinases interact with CBL proteins. Binding of a CBL protein to the regulatory NAF domain of CIPK protein lead to the activation of the kinase in a calcium-dependent manner. The sequence is that of CBL-interacting serine/threonine-protein kinase 2 (CIPK2) from Arabidopsis thaliana (Mouse-ear cress).